Reading from the N-terminus, the 74-residue chain is MANIKSSIKRIRISQRNRLRNQAIKSHIKWLMKHATKDEVESAIDKAVNKGVIHRNKAVRMKSKYERSHSRSTQ.

Belongs to the bacterial ribosomal protein bS20 family.

The protein resides in the plastid. It localises to the chloroplast. Binds directly to 16S ribosomal RNA. This is Small ribosomal subunit protein bS20c from Cyanidioschyzon merolae (strain NIES-3377 / 10D) (Unicellular red alga).